We begin with the raw amino-acid sequence, 446 residues long: Probable glycine dehydrogenase (decarboxylating) subunit 1 (446 aa).

The protein belongs to the GcvP family. N-terminal subunit subfamily. In terms of assembly, the glycine cleavage system is composed of four proteins: P, T, L and H. In this organism, the P 'protein' is a heterodimer of two subunits.

It carries out the reaction N(6)-[(R)-lipoyl]-L-lysyl-[glycine-cleavage complex H protein] + glycine + H(+) = N(6)-[(R)-S(8)-aminomethyldihydrolipoyl]-L-lysyl-[glycine-cleavage complex H protein] + CO2. The glycine cleavage system catalyzes the degradation of glycine. The P protein binds the alpha-amino group of glycine through its pyridoxal phosphate cofactor; CO(2) is released and the remaining methylamine moiety is then transferred to the lipoamide cofactor of the H protein. In Xanthobacter autotrophicus (strain ATCC BAA-1158 / Py2), this protein is Probable glycine dehydrogenase (decarboxylating) subunit 1.